We begin with the raw amino-acid sequence, 612 residues long: Sulfite reductase [NADPH] flavoprotein alpha-component (612 aa).

One can recognise a Flavodoxin-like domain in the interval 64 to 202 (VTLISASQTG…QAQQWRQQVV (139 aa)). FMN contacts are provided by residues 70–75 (SQTGNA), 117–120 (STQG), and 153–162 (LGDTSYEHFC). Residues 247-461 (TAPLTAQLSV…IEHNDNFRLP (215 aa)) form the FAD-binding FR-type domain. Residues T335, K369, 399–402 (RLYS), 417–419 (TVG), Y423, and 432–435 (GGAS) contribute to the FAD site. Residues 532 to 533 (SR), 538 to 542 (KIYVQ), and D574 contribute to the NADP(+) site. Y612 contributes to the FAD binding site.

It belongs to the NADPH-dependent sulphite reductase flavoprotein subunit CysJ family. This sequence in the N-terminal section; belongs to the flavodoxin family. In the C-terminal section; belongs to the flavoprotein pyridine nucleotide cytochrome reductase family. As to quaternary structure, alpha(8)-beta(8). The alpha component is a flavoprotein, the beta component is a hemoprotein. FAD is required as a cofactor. FMN serves as cofactor.

The enzyme catalyses hydrogen sulfide + 3 NADP(+) + 3 H2O = sulfite + 3 NADPH + 4 H(+). It functions in the pathway sulfur metabolism; hydrogen sulfide biosynthesis; hydrogen sulfide from sulfite (NADPH route): step 1/1. Functionally, component of the sulfite reductase complex that catalyzes the 6-electron reduction of sulfite to sulfide. This is one of several activities required for the biosynthesis of L-cysteine from sulfate. The flavoprotein component catalyzes the electron flow from NADPH -&gt; FAD -&gt; FMN to the hemoprotein component. The chain is Sulfite reductase [NADPH] flavoprotein alpha-component from Yersinia pestis bv. Antiqua (strain Nepal516).